A 90-amino-acid polypeptide reads, in one-letter code: Evasin P1126 (90 aa).

Positions 1–25 are cleaved as a signal peptide; sequence MTSHSAVRIAIFAVIALHSIFECLS. 3 disulfides stabilise this stretch: Cys46–Cys62, Cys50–Cys64, and Cys58–Cys75. The N-linked (GlcNAc...) asparagine glycan is linked to Asn55. Asn77 carries an N-linked (GlcNAc...) asparagine glycan.

The protein resides in the secreted. Salivary chemokine-binding protein which binds to host chemokines CXCL1, CXCL2, CXCL3, CXCL4, CXCL5, CXCL6, CXCL7, CXCL10 and CXCL11. This is Evasin P1126 from Amblyomma cajennense (Cayenne tick).